The primary structure comprises 252 residues: 7-carboxy-7-deazaguanine synthase (252 aa).

Substrate contacts are provided by residues 22 to 24 and R37; that span reads LQG. The 224-residue stretch at 28-251 folds into the Radical SAM core domain; sequence FVGEPQAFVR…QVHKLVDFIP (224 aa). [4Fe-4S] cluster is bound by residues C41, C45, and C48. Position 102 (T102) interacts with substrate. G104 is a binding site for S-adenosyl-L-methionine.

Belongs to the radical SAM superfamily. 7-carboxy-7-deazaguanine synthase family. In terms of assembly, homodimer. The cofactor is [4Fe-4S] cluster. It depends on S-adenosyl-L-methionine as a cofactor. Mg(2+) is required as a cofactor.

The catalysed reaction is 6-carboxy-5,6,7,8-tetrahydropterin + H(+) = 7-carboxy-7-deazaguanine + NH4(+). The protein operates within purine metabolism; 7-cyano-7-deazaguanine biosynthesis. Its function is as follows. Catalyzes the complex heterocyclic radical-mediated conversion of 6-carboxy-5,6,7,8-tetrahydropterin (CPH4) to 7-carboxy-7-deazaguanine (CDG), a step common to the biosynthetic pathways of all 7-deazapurine-containing compounds. This is 7-carboxy-7-deazaguanine synthase from Methanopyrus kandleri (strain AV19 / DSM 6324 / JCM 9639 / NBRC 100938).